Reading from the N-terminus, the 98-residue chain is Large ribosomal subunit protein bL28 (98 aa).

This sequence belongs to the bacterial ribosomal protein bL28 family.

The sequence is that of Large ribosomal subunit protein bL28 from Bartonella bacilliformis (strain ATCC 35685 / KC583 / Herrer 020/F12,63).